Here is a 317-residue protein sequence, read N- to C-terminus: Ribose-phosphate pyrophosphokinase (317 aa).

Residues 41–43 (DME) and 100–101 (RQ) each bind ATP. Mg(2+) contacts are provided by His134 and Asp174. Lys197 is an active-site residue. D-ribose 5-phosphate-binding positions include Arg199, Asp223, and 227 to 231 (DSGGT).

This sequence belongs to the ribose-phosphate pyrophosphokinase family. Class I subfamily. As to quaternary structure, homohexamer. The cofactor is Mg(2+).

The protein resides in the cytoplasm. It catalyses the reaction D-ribose 5-phosphate + ATP = 5-phospho-alpha-D-ribose 1-diphosphate + AMP + H(+). The protein operates within metabolic intermediate biosynthesis; 5-phospho-alpha-D-ribose 1-diphosphate biosynthesis; 5-phospho-alpha-D-ribose 1-diphosphate from D-ribose 5-phosphate (route I): step 1/1. Its function is as follows. Involved in the biosynthesis of the central metabolite phospho-alpha-D-ribosyl-1-pyrophosphate (PRPP) via the transfer of pyrophosphoryl group from ATP to 1-hydroxyl of ribose-5-phosphate (Rib-5-P). In Bradyrhizobium diazoefficiens (strain JCM 10833 / BCRC 13528 / IAM 13628 / NBRC 14792 / USDA 110), this protein is Ribose-phosphate pyrophosphokinase.